Reading from the N-terminus, the 204-residue chain is MNAYRLYLVTDDQQDLPTLKHVVRKAVEGGVTMVQVREKHGDVREFIERAQAVKTILEGTGVPLIINDRVDVALAVDADGVHLGQSDMPAEIARQLIGPNKILGLSIETEDQLAEADSLPIDYIGLSAIFATPTKTNTKKHWGIGGLKMALNTTSLPIVAIGGINETNIPALSATGVHGLALVSAICHAENPTKAAEYLLSLMD.

4-amino-2-methyl-5-(diphosphooxymethyl)pyrimidine-binding positions include 35 to 39 (QVREK) and Asn-67. Mg(2+)-binding residues include Asp-68 and Asp-87. Ser-106 is a binding site for 4-amino-2-methyl-5-(diphosphooxymethyl)pyrimidine. Residue 132-134 (TPT) participates in 2-[(2R,5Z)-2-carboxy-4-methylthiazol-5(2H)-ylidene]ethyl phosphate binding. Lys-135 provides a ligand contact to 4-amino-2-methyl-5-(diphosphooxymethyl)pyrimidine. Residues Gly-163 and 183–184 (VS) each bind 2-[(2R,5Z)-2-carboxy-4-methylthiazol-5(2H)-ylidene]ethyl phosphate.

Belongs to the thiamine-phosphate synthase family. Requires Mg(2+) as cofactor.

The enzyme catalyses 2-[(2R,5Z)-2-carboxy-4-methylthiazol-5(2H)-ylidene]ethyl phosphate + 4-amino-2-methyl-5-(diphosphooxymethyl)pyrimidine + 2 H(+) = thiamine phosphate + CO2 + diphosphate. It catalyses the reaction 2-(2-carboxy-4-methylthiazol-5-yl)ethyl phosphate + 4-amino-2-methyl-5-(diphosphooxymethyl)pyrimidine + 2 H(+) = thiamine phosphate + CO2 + diphosphate. It carries out the reaction 4-methyl-5-(2-phosphooxyethyl)-thiazole + 4-amino-2-methyl-5-(diphosphooxymethyl)pyrimidine + H(+) = thiamine phosphate + diphosphate. It participates in cofactor biosynthesis; thiamine diphosphate biosynthesis; thiamine phosphate from 4-amino-2-methyl-5-diphosphomethylpyrimidine and 4-methyl-5-(2-phosphoethyl)-thiazole: step 1/1. In terms of biological role, condenses 4-methyl-5-(beta-hydroxyethyl)thiazole monophosphate (THZ-P) and 2-methyl-4-amino-5-hydroxymethyl pyrimidine pyrophosphate (HMP-PP) to form thiamine monophosphate (TMP). This is Thiamine-phosphate synthase from Vibrio parahaemolyticus serotype O3:K6 (strain RIMD 2210633).